Consider the following 269-residue polypeptide: 4-hydroxy-tetrahydrodipicolinate reductase (269 aa).

NAD(+) is bound by residues 10–15, Glu-36, 99–101, and 123–126; these read GANGRM, GTT, and AANF. The active-site Proton donor/acceptor is the His-156. Position 157 (His-157) interacts with (S)-2,3,4,5-tetrahydrodipicolinate. Lys-160 (proton donor) is an active-site residue. 166 to 167 is a (S)-2,3,4,5-tetrahydrodipicolinate binding site; sequence GT.

It belongs to the DapB family.

The protein resides in the cytoplasm. The enzyme catalyses (S)-2,3,4,5-tetrahydrodipicolinate + NAD(+) + H2O = (2S,4S)-4-hydroxy-2,3,4,5-tetrahydrodipicolinate + NADH + H(+). It catalyses the reaction (S)-2,3,4,5-tetrahydrodipicolinate + NADP(+) + H2O = (2S,4S)-4-hydroxy-2,3,4,5-tetrahydrodipicolinate + NADPH + H(+). It functions in the pathway amino-acid biosynthesis; L-lysine biosynthesis via DAP pathway; (S)-tetrahydrodipicolinate from L-aspartate: step 4/4. Catalyzes the conversion of 4-hydroxy-tetrahydrodipicolinate (HTPA) to tetrahydrodipicolinate. The polypeptide is 4-hydroxy-tetrahydrodipicolinate reductase (Neisseria meningitidis serogroup C (strain 053442)).